Consider the following 295-residue polypeptide: Protoheme IX farnesyltransferase (295 aa).

9 helical membrane-spanning segments follow: residues 9–29 (ITKP…FFLA), 36–56 (FGVF…GCVF), 80–100 (LVSL…GVAL), 108–128 (LAAL…SLYL), 135–155 (GTLV…CAVS), 163–183 (LTLL…IAIF), 209–229 (ILLY…GGYA), 230–250 (GLNY…MAWK), and 265–285 (FVFS…DFQV).

This sequence belongs to the UbiA prenyltransferase family. Protoheme IX farnesyltransferase subfamily.

It localises to the cell inner membrane. It carries out the reaction heme b + (2E,6E)-farnesyl diphosphate + H2O = Fe(II)-heme o + diphosphate. It participates in porphyrin-containing compound metabolism; heme O biosynthesis; heme O from protoheme: step 1/1. Functionally, converts heme B (protoheme IX) to heme O by substitution of the vinyl group on carbon 2 of heme B porphyrin ring with a hydroxyethyl farnesyl side group. The sequence is that of Protoheme IX farnesyltransferase from Pseudomonas syringae pv. tomato (strain ATCC BAA-871 / DC3000).